We begin with the raw amino-acid sequence, 122 residues long: Large ribosomal subunit protein uL18 (122 aa).

Positions 1 to 25 are disordered; it reads MSQISRKQQTQKRHRRLRRHITGTS. Residues 9 to 21 are compositionally biased toward basic residues; that stretch reads QTQKRHRRLRRHI.

Belongs to the universal ribosomal protein uL18 family. Part of the 50S ribosomal subunit; part of the 5S rRNA/L5/L18/L25 subcomplex. Contacts the 5S and 23S rRNAs.

In terms of biological role, this is one of the proteins that bind and probably mediate the attachment of the 5S RNA into the large ribosomal subunit, where it forms part of the central protuberance. The chain is Large ribosomal subunit protein uL18 from Synechococcus sp. (strain CC9605).